The chain runs to 573 residues: Sulfite reductase [NADPH] hemoprotein beta-component (573 aa).

Residues cysteine 436, cysteine 442, cysteine 481, and cysteine 485 each contribute to the [4Fe-4S] cluster site. Siroheme is bound at residue cysteine 485.

The protein belongs to the nitrite and sulfite reductase 4Fe-4S domain family. As to quaternary structure, alpha(8)-beta(8). The alpha component is a flavoprotein, the beta component is a hemoprotein. Siroheme is required as a cofactor. It depends on [4Fe-4S] cluster as a cofactor.

It carries out the reaction hydrogen sulfide + 3 NADP(+) + 3 H2O = sulfite + 3 NADPH + 4 H(+). Its pathway is sulfur metabolism; hydrogen sulfide biosynthesis; hydrogen sulfide from sulfite (NADPH route): step 1/1. Its function is as follows. Component of the sulfite reductase complex that catalyzes the 6-electron reduction of sulfite to sulfide. This is one of several activities required for the biosynthesis of L-cysteine from sulfate. The polypeptide is Sulfite reductase [NADPH] hemoprotein beta-component (Alteromonas mediterranea (strain DSM 17117 / CIP 110805 / LMG 28347 / Deep ecotype)).